The sequence spans 420 residues: MNLNKNNFLNYSILIPYLILAGIGIVMVFSTTVPDQLQKGLNPYKLVINQTAFELLSLIMIAVIYRLKLRALKNRKMIGTIMVILILSLIFCRIMPSSFALTAPVNGARGWIHIPGIGTVQPAEFAKVFIIWYLASVFSTKQEEIEKRDINEIFKGKTLFQKLFGGWRLPVVAILLVDLIMPDLGNTLIIAAVALIMIGASGISWRWYSGYSKLILSLMAIFLGFLFIVGGNIIPSFLPITYINKRFEAFVNPFTDLANSGHQLANSYYAIVNGGWTGRGLGNSIQKNGFLPEAQTDFIFPIVVEELGIIGGIIILAILFFLISRMLIVGIRAKSAFNSLIMIGVSGLLLVQVFVNVGGAIGIIPETGVTFPFLSQGGSSFLGLSLGIAFALNISADEKRREVSELSNHYSSSVPTYEND.

At 1–12 the chain is on the cytoplasmic side; that stretch reads MNLNKNNFLNYS. The chain crosses the membrane as a helical span at residues 13 to 33; the sequence is ILIPYLILAGIGIVMVFSTTV. The Extracellular portion of the chain corresponds to 34-43; sequence PDQLQKGLNP. Residues 44-64 traverse the membrane as a helical segment; that stretch reads YKLVINQTAFELLSLIMIAVI. Topologically, residues 65-80 are cytoplasmic; that stretch reads YRLKLRALKNRKMIGT. Residues 81 to 101 form a helical membrane-spanning segment; that stretch reads IMVILILSLIFCRIMPSSFAL. At 102 to 113 the chain is on the extracellular side; the sequence is TAPVNGARGWIH. A helical membrane pass occupies residues 114–134; the sequence is IPGIGTVQPAEFAKVFIIWYL. The Cytoplasmic segment spans residues 135-157; the sequence is ASVFSTKQEEIEKRDINEIFKGK. 2 helical membrane-spanning segments follow: residues 158–178 and 179–199; these read TLFQ…LLVD and LIMP…IMIG. The Cytoplasmic portion of the chain corresponds to 200–213; the sequence is ASGISWRWYSGYSK. The chain crosses the membrane as a helical span at residues 214–234; sequence LILSLMAIFLGFLFIVGGNII. The Extracellular segment spans residues 235-301; the sequence is PSFLPITYIN…PEAQTDFIFP (67 aa). A helical membrane pass occupies residues 302–322; sequence IVVEELGIIGGIIILAILFFL. Residues 323 to 340 are Cytoplasmic-facing; sequence ISRMLIVGIRAKSAFNSL. Residues 341–361 form a helical membrane-spanning segment; the sequence is IMIGVSGLLLVQVFVNVGGAI. Topologically, residues 362 to 370 are extracellular; that stretch reads GIIPETGVT. Residues 371–391 form a helical membrane-spanning segment; it reads FPFLSQGGSSFLGLSLGIAFA. Topologically, residues 392–420 are cytoplasmic; that stretch reads LNISADEKRREVSELSNHYSSSVPTYEND.

The protein belongs to the SEDS family. FtsW subfamily.

Its subcellular location is the cell membrane. It catalyses the reaction [GlcNAc-(1-&gt;4)-Mur2Ac(oyl-L-Ala-gamma-D-Glu-L-Lys-D-Ala-D-Ala)](n)-di-trans,octa-cis-undecaprenyl diphosphate + beta-D-GlcNAc-(1-&gt;4)-Mur2Ac(oyl-L-Ala-gamma-D-Glu-L-Lys-D-Ala-D-Ala)-di-trans,octa-cis-undecaprenyl diphosphate = [GlcNAc-(1-&gt;4)-Mur2Ac(oyl-L-Ala-gamma-D-Glu-L-Lys-D-Ala-D-Ala)](n+1)-di-trans,octa-cis-undecaprenyl diphosphate + di-trans,octa-cis-undecaprenyl diphosphate + H(+). The protein operates within cell wall biogenesis; peptidoglycan biosynthesis. Peptidoglycan polymerase that is essential for cell division. This Lactococcus lactis subsp. lactis (strain IL1403) (Streptococcus lactis) protein is Probable peptidoglycan glycosyltransferase FtsW (ftsW).